Reading from the N-terminus, the 282-residue chain is Proteasome subunit beta (282 aa).

A propeptide spans 1 to 54 (MGSHRDLPAGMVNHIFTNSGISSFTEFVGSYAPDLLPGRNETLAAPVGDRIPHA) (removed in mature form; by autocatalysis). Residue Thr55 is the Nucleophile of the active site.

It belongs to the peptidase T1B family. In terms of assembly, the 20S proteasome core is composed of 14 alpha and 14 beta subunits that assemble into four stacked heptameric rings, resulting in a barrel-shaped structure. The two inner rings, each composed of seven catalytic beta subunits, are sandwiched by two outer rings, each composed of seven alpha subunits. The catalytic chamber with the active sites is on the inside of the barrel. Has a gated structure, the ends of the cylinder being occluded by the N-termini of the alpha-subunits. Is capped by the proteasome-associated ATPase, ARC.

It localises to the cytoplasm. The catalysed reaction is Cleavage of peptide bonds with very broad specificity.. Its pathway is protein degradation; proteasomal Pup-dependent pathway. The formation of the proteasomal ATPase ARC-20S proteasome complex, likely via the docking of the C-termini of ARC into the intersubunit pockets in the alpha-rings, may trigger opening of the gate for substrate entry. Interconversion between the open-gate and close-gate conformations leads to a dynamic regulation of the 20S proteasome proteolysis activity. Component of the proteasome core, a large protease complex with broad specificity involved in protein degradation. This is Proteasome subunit beta from Streptosporangium roseum (strain ATCC 12428 / DSM 43021 / JCM 3005 / KCTC 9067 / NCIMB 10171 / NRRL 2505 / NI 9100).